A 2300-amino-acid chain; its full sequence is MTRNDGGSRYSSIDSAQSSITAKPFPLTPTSSLGSSMTRPLSPSLQAGSSSSNGGHNVSRSASQGARRPAPTRLKTDDGTQFASRSSRDFESSQSQSQPSHTQTRSHSLSQATLQSCSQPQLSLNSQQSQSPSQYHSQQTPTQQQPQQQVSPTGGSRLTQSPTTPSNASIREHRMSELGGYRREMAAMLDTTGGALSRTSSHSQQQPQQPQQQQQQQQQQQGHAAGSVSGTFSNLSQYAPYLGGNNGGGMSMGSFLNDSTDNLSVISQLSPGIRPMTARPSQASAGSMEFPDSAYYDDERRPSIASITTTASSQGSRTSKTRGGLQKLQQFFGDRDDWPGRDSSEISLPQPSHSGPMSTGKEHRSHSYSLPGSGRSHRDRNYSNATDHHPSTFGSVSTVGGRDRDASPVPSRPRTPVPAPEVVPFLYQEADDIARYGEAPVRTSLTGPDRDRYIDSSQNPPKTSSSARSGHSIVHLPGHHKHNKSNEDPRALKPSLSREDSAASFARDFRNGSSSMMGTRSRAQSPAPSWTGTSRGLKANSISDGTSSPAPSHKKGILGRFRRHNKDKEDGSSLRSGSNHTLVHRPSRQDLTRAAESTYPASVYVSDPSEQREVPVRPGYVRQTTAPGFTTKLFTSKKSSSAKQPQDDMDEDIGPTDMHMGGGTVYHLDTNLNDMEGILTKPQPMTPLDNSISMRRESEKMIVPITTDPEGAWAAPDSWAVRDNKKSLAPQVNEDLCSRQPSEEKEKKSNYYIRVFRSDSTWTTLTLPLTATAEDVIMGVAKKTYLPPGAQDSYSLLIKKHDLFRVLNSAEQPLRIQKRLFQQIGYQEKDGIDEIGREDNSYICRWVFLKEKEADMHLLSPDINFRNQKLNHVDLSGRNLITIPVPLYRKAAEIVSLNLSRNLSLDVPRDFIQACTALRDIKYNNNEAQALPKSFATASKLTYLDVSNNRLQDLDHSELSKLTGLLKLNLANNCLRSLPPTLGAYKSLRTLNISSNFLDVFPSFICELETIVDLDLSFNSINNLPDNLMKLRNLEKFVITNNRLSGPISESVRDLVSLRELDIRYNQISTIDVLSDLPRLEILSADHNQISKFSGSFERLRSLKLNSNPIVKFEVKAPVPTLKILNLSNAQLASIDESIDNLMNLERLILDSNYFVSLPNQIGNLKKLDHLSMANNHLGELPPEIGCLTELRTLDVHGNNMRKLPNEIWWANKLEHLNASSNILTEFPKPASRAPQAPGEASPSPGAYPFPNANKNGLLSRTPSMDDLNGDASRRPSQASSTLLGVAVSPVPSGPDNRKSSMVSLYGKGGRKTSVVSRSTTQSSTGVITPSNGPRKDSSLSYRFTHTFSGSLKNLYLADNQLDDDVFEELKHLPELRVLNLSCNDLSDMPQGTIRSWPQLVELYLSGNELTSLPAEDFLEEHCLLQTLHINGNKFINLPAEISRAKKLQVLDCSSNNLKYNVTNVPYDWNWNFNRDLRYLNLSGNKRLEIKNNYRQPQSYRDDDFADTDFSKLTNLRVLGLMEVTHTLPNIPDQTEDRRVRTSEMKAGAYLPYGMADTLGKNEHLSLFDLVVPRLGSVETDTLVALFDGKELSTGGSKIAKFLYEEFSRLFILELEKVKGKPNENPADALRRTFLSVNKLLMSLSNSADERGLDSHPSRNYAHTVLTKEDLNSGCVATVAYLSELKLYVANVGDVQGMLIQANGSFKMLTKKHDPADPVERSRIRNAGGWVSRNGRLNDVLNVSRAFGYTELLPAVQAAPDITEHTIDDKDETVLIASKELWEHLRPELIVDVARECRSDLMKASQKLRDLAIAYGSTNKLLIMMIGVANLKQRQAQQFKGQLNATFSMPQDDPSHVPPSGNKRRKVRAEGPLDSNLMRLNAEVPPPTGQLSIVFTDIKNSTQLWENYPEAMRLAIKLHNEVMRRQLRMIGGFEVKTEGDAFMVSFPTATSALLWCFAVQMKLLTVDWPPEVLSNSSCQPIYDRNNNLITRGLSVRMGAHWGEPLAERDPVTRRMDYYGPMVNKASRISAVADGGQITASSDFITEIHRCLETYKESVDVDEDSLEDDATAKAIRAELRALSSQGFEVKDMGEKKLKGLENPELVYSVYPHALVGRTEQHHAHTESTQNQAALQPYGALATPKPATMDPDSEIQFEPETIWALWRVALRLEMLCSTLEEPNARGLQAPETELLERMKQRAGEVTDHFLLNFMEHQISRIETCITSLAVRHIAIGSGPITKLNDLRAPMNDVLSTLKEQMDELARYKAKYGSLDQAETDDATDNNSSGDVDTLDGSDTEQE.

2 stretches are compositionally biased toward polar residues: residues 1 to 21 and 28 to 41; these read MTRNDGGSRYSSIDSAQSSIT and TPTSSLGSSMTRPL. Disordered regions lie at residues 1–256, 272–593, and 631–652; these read MTRN…GSFL, GIRP…DLTR, and TKLFTSKKSSSAKQPQDDMDED. Low complexity-rich tracts occupy residues 42 to 61 and 92 to 152; these read SPSLQAGSSSSNGGHNVSRS and SSQS…QVSP. Residues 153–169 show a composition bias toward polar residues; sequence TGGSRLTQSPTTPSNAS. Residues 170–185 show a composition bias toward basic and acidic residues; it reads IREHRMSELGGYRREM. Positions 204–221 are enriched in low complexity; it reads QQQPQQPQQQQQQQQQQQ. Polar residues predominate over residues 228-237; sequence VSGTFSNLSQ. Over residues 303 to 313 the composition is skewed to low complexity; sequence SIASITTTASS. Over residues 333 to 344 the composition is skewed to basic and acidic residues; sequence GDRDDWPGRDSS. The span at 345 to 357 shows a compositional bias: polar residues; the sequence is EISLPQPSHSGPM. A compositionally biased stretch (pro residues) spans 410-421; it reads PSRPRTPVPAPE. Residues 455–469 show a composition bias toward polar residues; the sequence is DSSQNPPKTSSSARS. Over residues 484–501 the composition is skewed to basic and acidic residues; that stretch reads KSNEDPRALKPSLSREDS. The segment covering 511-550 has biased composition (polar residues); that stretch reads NGSSSMMGTRSRAQSPAPSWTGTSRGLKANSISDGTSSPA. A compositionally biased stretch (basic residues) spans 552 to 565; sequence SHKKGILGRFRRHN. Over residues 631-643 the composition is skewed to low complexity; that stretch reads TKLFTSKKSSSAK. The Ras-associating domain maps to 749-841; that stretch reads SNYYIRVFRS…IDEIGREDNS (93 aa). LRR repeat units lie at residues 867 to 890, 892 to 914, 915 to 938, 939 to 961, 962 to 986, 988 to 1008, 1009 to 1031, 1033 to 1055, 1056 to 1079, 1081 to 1097, 1098 to 1119, 1120 to 1142, 1143 to 1165, 1166 to 1188, 1189 to 1211, and 1213 to 1234; these read NQKLNHVDLSGRNLITIPVPLYRK, AEIVSLNLSRNLSLDVPRDFIQA, CTALRDIKYNNNEAQALPKSFATA, SKLTYLDVSNNRLQDLDHSELSK, LTGLLKLNLANNCLRSLPPTLGAYK, LRTLNISSNFLDVFPSFICEL, ETIVDLDLSFNSINNLPDNLMKL, NLEKFVITNNRLSGPISESVRDL, VSLRELDIRYNQISTIDVLSDLPR, EILSADHNQISKFSGSF, ERLRSLKLNSNPIVKFEVKAPV, PTLKILNLSNAQLASIDESIDNL, MNLERLILDSNYFVSLPNQIGNL, KKLDHLSMANNHLGELPPEIGCL, TELRTLDVHGNNMRKLPNEIWWA, and KLEHLNASSNILTEFPKPASRA. A disordered region spans residues 1228–1336; that stretch reads PKPASRAPQA…VITPSNGPRK (109 aa). Residues 1253–1263 show a composition bias toward polar residues; sequence ANKNGLLSRTP. Residues 1313 to 1327 show a composition bias toward low complexity; that stretch reads TSVVSRSTTQSSTGV. 6 LRR repeats span residues 1349–1369, 1373–1396, 1398–1420, 1422–1445, 1447–1469, and 1474–1497; these read SGSLKNLYLADNQLDDDVFEE, LPELRVLNLSCNDLSDMPQGTIRS, PQLVELYLSGNELTSLPAEDFLE, HCLLQTLHINGNKFINLPAEISRA, KLQVLDCSSNNLKYNVTNVPYDW, and NRDLRYLNLSGNKRLEIKNNYRQP. The region spanning 1552 to 1828 is the PPM-type phosphatase domain; the sequence is PYGMADTLGK…NKLLIMMIGV (277 aa). Residues 1847 to 1867 are disordered; sequence FSMPQDDPSHVPPSGNKRRKV. In terms of domain architecture, Guanylate cyclase spans 1892 to 2029; sequence SIVFTDIKNS…PMVNKASRIS (138 aa). Residues D1897 and D1940 each contribute to the Mg(2+) site. Positions 2272–2300 are disordered; sequence LDQAETDDATDNNSSGDVDTLDGSDTEQE. Positions 2290-2300 are enriched in acidic residues; sequence DTLDGSDTEQE.

This sequence belongs to the adenylyl cyclase class-4/guanylyl cyclase family. Mg(2+) is required as a cofactor.

It carries out the reaction ATP = 3',5'-cyclic AMP + diphosphate. Its function is as follows. Plays essential roles in regulation of cellular metabolism by catalyzing the synthesis of a second messenger, cAMP. In Neurospora crassa (strain ATCC 24698 / 74-OR23-1A / CBS 708.71 / DSM 1257 / FGSC 987), this protein is Adenylate cyclase (cr-1).